A 227-amino-acid polypeptide reads, in one-letter code: ATP synthase subunit a (227 aa).

The next 5 helical transmembrane spans lie at 16 to 36 (AFVYAFHFCLVALIILIVAYI), 79 to 99 (LVATIGFIVFFSNVIGIIPGF), 105 to 125 (SLNLTLVLALVVFIYYNFEGI), 176 to 196 (LFLLAMLTLAPWFAPLPAFAL), and 202 to 222 (VLQTFIFMMLTYVYLAGAVAI).

The protein belongs to the ATPase A chain family. In terms of assembly, F-type ATPases have 2 components, CF(1) - the catalytic core - and CF(0) - the membrane proton channel. CF(1) has five subunits: alpha(3), beta(3), gamma(1), delta(1), epsilon(1). CF(0) has three main subunits: a(1), b(2) and c(9-12). The alpha and beta chains form an alternating ring which encloses part of the gamma chain. CF(1) is attached to CF(0) by a central stalk formed by the gamma and epsilon chains, while a peripheral stalk is formed by the delta and b chains.

Its subcellular location is the cell inner membrane. Functionally, key component of the proton channel; it plays a direct role in the translocation of protons across the membrane. The protein is ATP synthase subunit a of Campylobacter concisus (strain 13826).